A 474-amino-acid polypeptide reads, in one-letter code: Na(+)/H(+) antiporter NhaA 3 (474 aa).

The next 11 helical transmembrane spans lie at 31-51, 73-93, 110-130, 141-161, 171-191, 194-214, 220-240, 280-300, 309-329, 347-367, and 378-398; these read VGGVLLLVAAIAALVWANIPA, LSVAHWAADGLLAIFFFVAGI, AALPVVAALCGMVVPAVVYTV, GWAVPTATDIAFALAVLAVIG, FLLTLAVVDDLFAILIIAVFF, TLNFAALGGAVVGLAVFWLLL, GWYVYVPLGLVIWALMYNSGV, LAVPLFALFSAGVAITGGALA, LGVVLGLVVGKTLGIFGGTWL, VFAVATLAGIGFTVSLLIGEL, and EVKAAVLTGSLIAAALATVLL.

Belongs to the NhaA Na(+)/H(+) (TC 2.A.33) antiporter family.

The protein localises to the cell membrane. It catalyses the reaction Na(+)(in) + 2 H(+)(out) = Na(+)(out) + 2 H(+)(in). In terms of biological role, na(+)/H(+) antiporter that extrudes sodium in exchange for external protons. The chain is Na(+)/H(+) antiporter NhaA 3 from Streptomyces coelicolor (strain ATCC BAA-471 / A3(2) / M145).